A 333-amino-acid polypeptide reads, in one-letter code: Transaldolase (333 aa).

Lys135 serves as the catalytic Schiff-base intermediate with substrate.

Belongs to the transaldolase family. Type 1 subfamily. As to quaternary structure, homodimer.

The protein resides in the cytoplasm. It catalyses the reaction D-sedoheptulose 7-phosphate + D-glyceraldehyde 3-phosphate = D-erythrose 4-phosphate + beta-D-fructose 6-phosphate. The protein operates within carbohydrate degradation; pentose phosphate pathway; D-glyceraldehyde 3-phosphate and beta-D-fructose 6-phosphate from D-ribose 5-phosphate and D-xylulose 5-phosphate (non-oxidative stage): step 2/3. In terms of biological role, transaldolase is important for the balance of metabolites in the pentose-phosphate pathway. The sequence is that of Transaldolase from Prochlorococcus marinus (strain MIT 9301).